The primary structure comprises 222 residues: CCA-adding enzyme (222 aa).

ATP is bound by residues serine 50 and lysine 53. CTP-binding residues include serine 50 and lysine 53. Residues aspartate 61, aspartate 63, and aspartate 112 each contribute to the Mg(2+) site. Residues histidine 135, lysine 155, and tyrosine 164 each contribute to the ATP site. Residues histidine 135, lysine 155, and tyrosine 164 each coordinate CTP.

The protein belongs to the tRNA nucleotidyltransferase/poly(A) polymerase family. Archaeal CCA-adding enzyme subfamily. In terms of assembly, homodimer. The cofactor is Mg(2+).

The catalysed reaction is a tRNA precursor + 2 CTP + ATP = a tRNA with a 3' CCA end + 3 diphosphate. The enzyme catalyses a tRNA with a 3' CCA end + 2 CTP + ATP = a tRNA with a 3' CCACCA end + 3 diphosphate. Catalyzes the addition and repair of the essential 3'-terminal CCA sequence in tRNAs without using a nucleic acid template. Adds these three nucleotides in the order of C, C, and A to the tRNA nucleotide-73, using CTP and ATP as substrates and producing inorganic pyrophosphate. tRNA 3'-terminal CCA addition is required both for tRNA processing and repair. Also involved in tRNA surveillance by mediating tandem CCA addition to generate a CCACCA at the 3' terminus of unstable tRNAs. While stable tRNAs receive only 3'-terminal CCA, unstable tRNAs are marked with CCACCA and rapidly degraded. The polypeptide is CCA-adding enzyme (Thermoplasma acidophilum).